The primary structure comprises 279 residues: MTRPLSYFHLHLISDATGETLLAAGRAAAAQYANARAIEHIYPLIRTEKQLRKVLEGIDAEPGIVLYTVVDQKLAAIIDESCADMGVPSVSVLEPVLNTFQSYLGAPAHRRASAQHVLNADYFRRIDALNFMMEHDDGQLPLDIEEADVIIVGISRTSKTPTSIYLANRGIKAANVPLVLGIPVPEILFAAKRPLIVGLVATAERISQIRQNRPLGNIPSLDTGLYTDRVSISEELAYARNLCNRHGWPIIDVSRRSIEETAAAILALLRNGKKEGSSS.

Position 153-160 (153-160) interacts with ADP; sequence GISRTSKT.

This sequence belongs to the pyruvate, phosphate/water dikinase regulatory protein family. PDRP subfamily.

The enzyme catalyses N(tele)-phospho-L-histidyl/L-threonyl-[pyruvate, phosphate dikinase] + ADP = N(tele)-phospho-L-histidyl/O-phospho-L-threonyl-[pyruvate, phosphate dikinase] + AMP + H(+). It catalyses the reaction N(tele)-phospho-L-histidyl/O-phospho-L-threonyl-[pyruvate, phosphate dikinase] + phosphate + H(+) = N(tele)-phospho-L-histidyl/L-threonyl-[pyruvate, phosphate dikinase] + diphosphate. In terms of biological role, bifunctional serine/threonine kinase and phosphorylase involved in the regulation of the pyruvate, phosphate dikinase (PPDK) by catalyzing its phosphorylation/dephosphorylation. This is Putative pyruvate, phosphate dikinase regulatory protein from Brucella abortus (strain 2308).